We begin with the raw amino-acid sequence, 333 residues long: MKSILEQLSSMTVVVADTGDLDSIKKFQPRDATTNPSLILAAAKNPDYVKLIDKAIESSENTLPNGFSEIELIKETVDQVSVFFGKEILKIISGRVSTEVDARLSFDTEATVKKARKLINLYKNFGIEKERILIKIAATWEGIKAAEILEKEGIKCNLTLLFNFCQAVTCANANITLISPFVGRILDWHKAKTGKTSFIGAEDPGVISVTQIYKYFKEKGFKTEVMGASFRNLDEIKELAGCDLLTIAPKFLEELKREKGVLIRKLDASTKINNSIDYKFEEKDFRLSMLEDQMASEKLSEGITGFSKAIEELEELLIERLSEMKNHKLISAN.

Catalysis depends on Lys135, which acts as the Schiff-base intermediate with substrate.

Belongs to the transaldolase family. Type 1 subfamily. As to quaternary structure, homodimer.

The protein localises to the cytoplasm. It carries out the reaction D-sedoheptulose 7-phosphate + D-glyceraldehyde 3-phosphate = D-erythrose 4-phosphate + beta-D-fructose 6-phosphate. It functions in the pathway carbohydrate degradation; pentose phosphate pathway; D-glyceraldehyde 3-phosphate and beta-D-fructose 6-phosphate from D-ribose 5-phosphate and D-xylulose 5-phosphate (non-oxidative stage): step 2/3. Its function is as follows. Transaldolase is important for the balance of metabolites in the pentose-phosphate pathway. This Prochlorococcus marinus (strain MIT 9312) protein is Transaldolase.